A 175-amino-acid polypeptide reads, in one-letter code: Ribosome maturation factor RimM (175 aa).

In terms of domain architecture, PRC barrel spans 97 to 175 (EGEFYWHQLE…RMVVDWDPEF (79 aa)).

It belongs to the RimM family. In terms of assembly, binds ribosomal protein uS19.

It localises to the cytoplasm. An accessory protein needed during the final step in the assembly of 30S ribosomal subunit, possibly for assembly of the head region. Essential for efficient processing of 16S rRNA. May be needed both before and after RbfA during the maturation of 16S rRNA. It has affinity for free ribosomal 30S subunits but not for 70S ribosomes. In Marinobacter nauticus (strain ATCC 700491 / DSM 11845 / VT8) (Marinobacter aquaeolei), this protein is Ribosome maturation factor RimM.